The chain runs to 76 residues: UPF0291 protein BPUM_1689 (76 aa).

Disordered stretches follow at residues 1-31 and 56-76; these read MISK…TEQK and DPEG…QNLH. Basic and acidic residues-rich tracts occupy residues 12–31 and 63–76; these read ELSK…TEQK and TPEK…QNLH.

The protein belongs to the UPF0291 family.

The protein localises to the cytoplasm. The sequence is that of UPF0291 protein BPUM_1689 from Bacillus pumilus (strain SAFR-032).